The sequence spans 710 residues: Low-temperature-induced 78 kDa protein (710 aa).

Disordered regions lie at residues 1 to 198 (MDQT…LDGQ), 225 to 269 (YQSK…RDLS), and 305 to 507 (GFGD…STYT). The segment covering 14 to 25 (QHPEEVEHHENG) has biased composition (basic and acidic residues). The span at 29–41 (MFRKVKARAKKFK) shows a compositional bias: basic residues. Residues 49 to 58 (QSNEHEQDHD) show a composition bias toward basic and acidic residues. The segment covering 59 to 73 (LVEEDDDDDELEPEV) has biased composition (acidic residues). Basic and acidic residues predominate over residues 138–168 (SDKEEKRDVPIHHPLSELSDREESRETHHES). Polar residues predominate over residues 169–187 (LNTPVSLLSGTEDVTSTFA). 5 consecutive repeat copies span residues 303–316 (PVGF…ELEK), 317–331 (DFPT…KTET), 336–350 (NSPS…KTES), 357–370 (PMGF…ELEK), and 398–412 (NFPV…KNES). The interval 303–370 (PVGFGDESGA…GSESGAELEK (68 aa)) is 2 X 14 AA repeats of P-[MV]-G-F-G-[DS]-E-S-G-A-E-L-E-K. Basic and acidic residues-rich tracts occupy residues 313-331 (ELEK…KTET), 340-352 (RSHE…ESGN), 367-380 (ELEK…DSGR), 402-418 (RSHE…DKDV), 442-466 (EDKF…KTET), and 475-487 (SHPK…KESR). The segment at 317 to 412 (DFPTRSHDFD…SHELDLKNES (96 aa)) is 3 X 15 AA repeats of [DN]-[FS]-P-[STV]-R-S-H-[DE]-[FL]-D-[LM]-K-[NT]-E-[ST]. 3 repeat units span residues 510 to 514 (FASML), 532 to 536 (VDEKL), and 550 to 554 (VTTKL). Positions 510-600 (FASMLGYSGE…AFSDMVAEKL (91 aa)) are 5 X 5 AA repeats of [FV]-[ADT]-[EST]-[KM]-L. A disordered region spans residues 537 to 577 (TPVNEKDQETESAVTTKLPISGGGSGVEEQRGEDKSVSGRD). The span at 564–577 (EEQRGEDKSVSGRD) shows a compositional bias: basic and acidic residues. Repeat copies occupy residues 579-583 (VAEKL) and 596-600 (VAEKL). Residues 601–710 (QIGGEEEKKE…STVVPVQKEL (110 aa)) form a disordered region. The segment covering 605-626 (EEEKKETTTKEVEKISTEKAAS) has biased composition (basic and acidic residues). Ser-626 is subject to Phosphoserine. The segment covering 638 to 654 (GGGGMVGRIKGWFGGGA) has biased composition (gly residues). 2 tandem repeats follow at residues 648-670 (GWFG…EEAP) and 674-696 (GWFG…EESP). The 2 X 23 AA repeats stretch occupies residues 648-696 (GWFGGGATDEVKPESPHSVEEAPKSSGWFGGGATEEVKPKSPHSVEESP). Composition is skewed to basic and acidic residues over residues 656–670 (DEVK…EEAP) and 682–693 (EEVKPKSPHSVE).

This sequence belongs to the LTI78/LTI65 family. As to expression, accumulates rapidly in leaves, stems, roots, flower petals, filaments, and sepals during cold-acclimation.

Its subcellular location is the cytoplasm. Involved in responses to abiotic stresses. Regulates probably root elongation in cold conditions. This chain is Low-temperature-induced 78 kDa protein, found in Arabidopsis thaliana (Mouse-ear cress).